Reading from the N-terminus, the 517-residue chain is Bifunctional purine biosynthesis protein PurH (517 aa).

One can recognise an MGS-like domain in the interval 1–145; sequence MSPLALVSVS…KNHKYVSVLV (145 aa).

It belongs to the PurH family.

The catalysed reaction is (6R)-10-formyltetrahydrofolate + 5-amino-1-(5-phospho-beta-D-ribosyl)imidazole-4-carboxamide = 5-formamido-1-(5-phospho-D-ribosyl)imidazole-4-carboxamide + (6S)-5,6,7,8-tetrahydrofolate. It catalyses the reaction IMP + H2O = 5-formamido-1-(5-phospho-D-ribosyl)imidazole-4-carboxamide. Its pathway is purine metabolism; IMP biosynthesis via de novo pathway; 5-formamido-1-(5-phospho-D-ribosyl)imidazole-4-carboxamide from 5-amino-1-(5-phospho-D-ribosyl)imidazole-4-carboxamide (10-formyl THF route): step 1/1. It participates in purine metabolism; IMP biosynthesis via de novo pathway; IMP from 5-formamido-1-(5-phospho-D-ribosyl)imidazole-4-carboxamide: step 1/1. In Prochlorococcus marinus (strain MIT 9215), this protein is Bifunctional purine biosynthesis protein PurH.